The primary structure comprises 61 residues: MAKKSMIAKNKRPAKFSTQAYTRCEKCGRPHSVYRKFQLCRVCFRDLAYKGQVPGVTKASW.

Zn(2+)-binding residues include Cys24, Cys27, Cys40, and Cys43.

This sequence belongs to the universal ribosomal protein uS14 family. Zinc-binding uS14 subfamily. As to quaternary structure, part of the 30S ribosomal subunit. Contacts proteins S3 and S10. Zn(2+) is required as a cofactor.

Binds 16S rRNA, required for the assembly of 30S particles and may also be responsible for determining the conformation of the 16S rRNA at the A site. In Streptococcus agalactiae serotype Ia (strain ATCC 27591 / A909 / CDC SS700), this protein is Small ribosomal subunit protein uS14B.